The primary structure comprises 1058 residues: MLTRIRNAGVGGNAARRVRLLAGYTGARMAHAAALNSTTGAGGAARAAGAGRRAHSDVHVWALRQQSGIHRGGQCILKQDREPDQSDDKKVPPRAEEGRDEEAVRDEEAERQPREEQANRSSEASSSRGSGGSASSAGGGGRSNPPSEGEVPRKYEELMVLPMSNRPLFPGYYKSVTVYDPAVIEAICGLLRRNIPYLGAFLLKDRSMDKDSIDSIEEVHRVGVFAQITSVHHGVDVDGRKAMSMVLYPHRRVQLDELVSTPKLVAEAKEKATDDGLVQAKKEKFRDMSEGGEEEENPTEFLLETGVTVGNFSDHLDLPVDHSSVMLNALTSETLNTFKHLSSINATVKQQLIALSSITTSLKPNIFESPSLLADFAAAISVGDPNELQDVLETRDVEQRLEKALVFIKKEVYVAELQQKIEKETDAKVQKRYKDQVLTEQMRGIKKEMGVEDAKDKAIATFRERAEKLKFPEHVKKIFDEELARLSGLESAMSEYSVTKNYLDWITSLPWGIASTDQYSILSARKVLDNDHYGMQDVKDRILEFIAVGKLKGQIDGKIICLVGPPGVGKTSIGQSISRALNRTFFRFSVGGMSDVSEIKGHRRTYIGALPGRLIHALKRCQTENPLILIDEIDKLGRTGHQGDPASALLELLDPEQNKTFLDTYLDFPVDMSKVLFVCTANTLDTIPRPLLDRMEVIELSGYVADEKVKIAERHLIPAAKKSTGLGSANINLTSDSIVALLKNYCRESGVRSLKKHIEKIYRKAALKIVQQLSIDDTPKSAPAETNIEPENGKPDASAKPLTNNLPAPEPLNIPDSVKIDITPETLVEYLGPPVFTADRIYEKTPAGVVMGLAYTYLGGCTMYVESVLGQPLSKDSNPSLEHTGQLGDVMKESSRLAYSFSKMFMSRRFPNNRFFEKAAIHLHCPEGATPKDGPSAGITMASSLLSLAMNKPLDPTIAMTGELTLTGKVLRIGGIKEKTVAAKRSGAKTIIFPKDNMADWEDLPAHVKEGLIPVAAEWYDDVFNVLFGSVTEEEGNNVWKDQFDLIERSKATASSSN.

The N-terminal 47 residues, 1-47 (MLTRIRNAGVGGNAARRVRLLAGYTGARMAHAAALNSTTGAGGAARA), are a transit peptide targeting the mitochondrion. The interval 72 to 151 (GGQCILKQDR…RSNPPSEGEV (80 aa)) is disordered. Composition is skewed to basic and acidic residues over residues 78-97 (KQDR…RAEE) and 106-118 (DEEA…EEQA). Residues 129-142 (GSGGSASSAGGGGR) show a composition bias toward gly residues. Residues 158–412 (LMVLPMSNRP…KALVFIKKEV (255 aa)) enclose the Lon N-terminal domain. 564–571 (GPPGVGKT) is an ATP binding site. Residues 778–814 (TPKSAPAETNIEPENGKPDASAKPLTNNLPAPEPLNI) form a disordered region. Positions 844-1030 (KTPAGVVMGL…DDVFNVLFGS (187 aa)) constitute a Lon proteolytic domain. Catalysis depends on residues Ser-936 and Lys-979.

It belongs to the peptidase S16 family. Homohexamer or homoheptamer. Organized in a ring with a central cavity.

The protein resides in the mitochondrion matrix. The catalysed reaction is Hydrolysis of proteins in presence of ATP.. ATP-dependent serine protease that mediates the selective degradation of misfolded, unassembled or oxidatively damaged polypeptides as well as certain short-lived regulatory proteins in the mitochondrial matrix. May also have a chaperone function in the assembly of inner membrane protein complexes. Participates in the regulation of mitochondrial gene expression and in the maintenance of the integrity of the mitochondrial genome. Binds to mitochondrial DNA in a site-specific manner. In Eremothecium gossypii (strain ATCC 10895 / CBS 109.51 / FGSC 9923 / NRRL Y-1056) (Yeast), this protein is Lon protease homolog, mitochondrial.